Consider the following 693-residue polypeptide: Elongation factor G (693 aa).

In terms of domain architecture, tr-type G spans 8 to 282 (EKTRNIGIMA…AVIDYLPSPL (275 aa)). GTP contacts are provided by residues 17–24 (AHVDAGKT), 81–85 (DTPGH), and 135–138 (NKMD).

The protein belongs to the TRAFAC class translation factor GTPase superfamily. Classic translation factor GTPase family. EF-G/EF-2 subfamily.

Its subcellular location is the cytoplasm. Catalyzes the GTP-dependent ribosomal translocation step during translation elongation. During this step, the ribosome changes from the pre-translocational (PRE) to the post-translocational (POST) state as the newly formed A-site-bound peptidyl-tRNA and P-site-bound deacylated tRNA move to the P and E sites, respectively. Catalyzes the coordinated movement of the two tRNA molecules, the mRNA and conformational changes in the ribosome. The protein is Elongation factor G of Streptococcus pneumoniae (strain P1031).